The chain runs to 247 residues: uncharacterized protein (247 aa).

Residues 70–205 form the N-acetyltransferase domain; it reads ISLWMGPGNN…QKVPLEIMIR (136 aa).

The protein belongs to the acetyltransferase family.

The protein localises to the endoplasmic reticulum. It is found in the golgi apparatus. Its subcellular location is the vacuole. This is an uncharacterized protein from Schizosaccharomyces pombe (strain 972 / ATCC 24843) (Fission yeast).